A 261-amino-acid chain; its full sequence is uncharacterized protein (261 aa).

The next 5 helical transmembrane spans lie at 38 to 58, 134 to 154, 163 to 183, 195 to 215, and 219 to 239; these read FIYL…ITLL, YTLM…LALI, ILIN…TYVL, YMGL…LFFL, and HKSV…CLKV.

It is found in the membrane. This is an uncharacterized protein from Dictyostelium discoideum (Social amoeba).